The following is an 83-amino-acid chain: Large ribosomal subunit protein bL27 (83 aa).

This sequence belongs to the bacterial ribosomal protein bL27 family.

This Treponema denticola (strain ATCC 35405 / DSM 14222 / CIP 103919 / JCM 8153 / KCTC 15104) protein is Large ribosomal subunit protein bL27.